A 302-amino-acid chain; its full sequence is MTLPLTFSPEVAEARAAGAPLVALESTIITHGMPYPQNLDTARAVEAEVRAAGAVPATIAIMDGRMHIGLTGTELEVLAQADGVAKLSRADLAACLARGGVGATTVAATMICAALAGIHVFATGGIGGVHKGAEDTFDISADLRELAHTPVTVIAAGAKAILDLPKTLEVLETLGVPVIAHGQDAFPAFWSRDSGLPAPLRADSATEIARAHLMRSKLGLPGGQLVANPIPEDAEIPASTLAPLIVQAQSEADAKGVARKAVTPFLLNRLFELTDGATLASNIALVLNNARLGAAVARALTT.

E25 functions as the Proton donor in the catalytic mechanism. Residues K86 and V106 each coordinate substrate. Mn(2+) is bound at residue D138. 140 to 142 provides a ligand contact to substrate; sequence SAD. K159 (nucleophile) is an active-site residue.

It belongs to the pseudouridine-5'-phosphate glycosidase family. As to quaternary structure, homotrimer. Requires Mn(2+) as cofactor.

The enzyme catalyses D-ribose 5-phosphate + uracil = psi-UMP + H2O. Catalyzes the reversible cleavage of pseudouridine 5'-phosphate (PsiMP) to ribose 5-phosphate and uracil. Functions biologically in the cleavage direction, as part of a pseudouridine degradation pathway. This is Pseudouridine-5'-phosphate glycosidase from Jannaschia sp. (strain CCS1).